Here is a 358-residue protein sequence, read N- to C-terminus: Gibberellin 2-beta-dioxygenase 6 (358 aa).

In terms of domain architecture, Fe2OG dioxygenase spans 207–308; it reads DETTCFLRLN…RLSVAYFLCP (102 aa). Position 218 (tyrosine 218) interacts with 2-oxoglutarate. Positions 233, 235, and 289 each coordinate Fe cation. 2-oxoglutarate-binding residues include arginine 299 and serine 301.

The protein belongs to the iron/ascorbate-dependent oxidoreductase family. GA2OX subfamily. L-ascorbate serves as cofactor. The cofactor is Fe(2+). In terms of tissue distribution, expressed in panicles. Expressed at low levels in young shoots, leaf blades and elongating internodes.

The protein resides in the cytoplasm. The protein localises to the nucleus. The enzyme catalyses gibberellin A1 + 2-oxoglutarate + O2 = gibberellin A8 + succinate + CO2. Catalyzes the 2-beta-hydroxylation of several biologically active gibberellins, leading to the homeostatic regulation of their endogenous level. Catabolism of gibberellins (GAs) plays a central role in plant development. In vitro, converts GA12 and GA53 to the corresponding 2-beta-hydroxylated products GA110 and GA97, respectively. The polypeptide is Gibberellin 2-beta-dioxygenase 6 (Oryza sativa subsp. japonica (Rice)).